The sequence spans 180 residues: Flavodoxin 2 (180 aa).

Residues 4-173 (IGLFFGSNTG…RVAAWLAQIA (170 aa)) form the Flavodoxin-like domain. FMN contacts are provided by residues 10–15 (SNTGKT), T57, G61, D99, 106–108 (NYL), and D155.

FMN is required as a cofactor.

Functionally, flavodoxins are low-potential electron donors to a number of redox enzymes. NifF is the electron donor to nitrogenase, and is thus implicated in nitrogen fixation. Does not function as an electron donor to nitrite reductase. The protein is Flavodoxin 2 of Azotobacter vinelandii.